The sequence spans 298 residues: DNA-3-methyladenine glycosylase (298 aa).

The N-terminal 17 residues, 1-17, are a transit peptide targeting the mitochondrion; it reads MVTPALQMKKPKQFCRR. The interval 1-65 is disordered; sequence MVTPALQMKK…CPRERCLGPP (65 aa). Basic residues predominate over residues 9 to 25; sequence KKPKQFCRRMGQKKQRP. 2 positions are modified to phosphoserine: Ser-78 and Ser-252.

The protein belongs to the DNA glycosylase MPG family. As to quaternary structure, binds MBD1. Binds SSBP1.

The protein resides in the cytoplasm. Its subcellular location is the mitochondrion matrix. It localises to the mitochondrion nucleoid. The protein localises to the nucleus. The catalysed reaction is Hydrolysis of alkylated DNA, releasing 3-methyladenine, 3-methylguanine, 7-methylguanine and 7-methyladenine.. Its activity is regulated as follows. Binding to SSBP1 in mitochondria inhibits glycosylase activity in the context of a single-stranded DNA (ssDNA), but not a double-stranded DNA (dsDNA) substrates. Functionally, hydrolysis of the deoxyribose N-glycosidic bond to excise 3-methyladenine, and 7-methylguanine from the damaged DNA polymer formed by alkylation lesions. The sequence is that of DNA-3-methyladenine glycosylase (MPG) from Homo sapiens (Human).